The following is a 2130-amino-acid chain: COPII coat assembly protein SEC16 (2130 aa).

Basic and acidic residues-rich tracts occupy residues Lys-27–Ser-38, Asp-50–Leu-72, and Glu-88–Pro-97. 9 disordered regions span residues Lys-27 to Lys-516, Phe-532 to Tyr-585, Pro-598 to Ser-647, Gln-810 to Ile-842, Asp-1347 to Val-1366, Asp-1374 to Ser-1519, Pro-1558 to Asp-1731, Asp-1753 to Lys-1997, and Ile-2014 to Lys-2130. The span at Gln-98–Gly-120 shows a compositional bias: polar residues. Composition is skewed to basic and acidic residues over residues Glu-128–Ala-138, Asp-149–Leu-170, Glu-178–Asp-188, and Lys-199–Ile-216. Composition is skewed to polar residues over residues Trp-267 to Ala-279 and Ala-293 to Gln-335. The segment covering Asp-380–Asp-395 has biased composition (basic and acidic residues). Over residues Thr-405–Asp-420 the composition is skewed to low complexity. Polar residues predominate over residues Met-421–Ile-431. Composition is skewed to basic and acidic residues over residues Pro-447–Leu-481 and Glu-504–Thr-513. The span at Thr-538–Thr-568 shows a compositional bias: low complexity. The segment covering Arg-601–Pro-617 has biased composition (polar residues). 5 stretches are compositionally biased toward polar residues: residues Asp-1374–Gln-1388, Val-1399–Ser-1420, Leu-1428–Asn-1498, Tyr-1505–Ser-1519, and Ser-1559–Ile-1574. A compositionally biased stretch (basic and acidic residues) spans Thr-1627–Asp-1640. Composition is skewed to polar residues over residues Ser-1701–Lys-1714 and Thr-1722–Asp-1731. A compositionally biased stretch (basic and acidic residues) spans Asp-1753 to Ser-1779. Composition is skewed to polar residues over residues Ala-1793 to Val-1803 and Thr-1819 to Arg-1839. Residues Thr-1840 to Ser-1857 show a composition bias toward basic and acidic residues. Residues Ser-1896–Tyr-1911 are compositionally biased toward low complexity. Residues Val-1925–Asp-1935 show a composition bias toward acidic residues. Composition is skewed to basic and acidic residues over residues Glu-1936–Gln-1963 and Arg-1981–Lys-1997. 3 stretches are compositionally biased toward low complexity: residues Ser-2039 to Ser-2050, Ala-2061 to Gln-2083, and Pro-2092 to Ser-2104.

Belongs to the SEC16 family.

Its subcellular location is the endoplasmic reticulum membrane. Functionally, involved in the initiation of assembly of the COPII coat required for the formation of transport vesicles from the endoplasmic reticulum (ER) and the selection of cargo molecules. Also involved in autophagy. The chain is COPII coat assembly protein SEC16 (SEC16) from Debaryomyces hansenii (strain ATCC 36239 / CBS 767 / BCRC 21394 / JCM 1990 / NBRC 0083 / IGC 2968) (Yeast).